A 203-amino-acid polypeptide reads, in one-letter code: Peptidyl-prolyl cis-trans isomerase FKBP11 (203 aa).

The N-terminal stretch at 1–29 (MTLRPSLLPLRLLLLLLLLLRGAVCQAEA) is a signal peptide. A PPIase FKBP-type domain is found at 59 to 146 (GDTLHIHYSG…HFDVELIALI (88 aa)). A helical transmembrane segment spans residues 158-178 (ILPLVGMAMVPALLGLIGYHL).

The protein belongs to the FKBP-type PPIase family. Interacts with IFITM5.

It localises to the membrane. The enzyme catalyses [protein]-peptidylproline (omega=180) = [protein]-peptidylproline (omega=0). PPIases accelerate the folding of proteins during protein synthesis. The sequence is that of Peptidyl-prolyl cis-trans isomerase FKBP11 (FKBP11) from Bos taurus (Bovine).